We begin with the raw amino-acid sequence, 85 residues long: Kappa-theraphotoxin-Gr1a (85 aa).

The N-terminal stretch at Met-1–Gly-21 is a signal peptide. Residues Ser-22 to Arg-49 constitute a propeptide that is removed on maturation. Disulfide bonds link Cys-51–Cys-65, Cys-58–Cys-70, and Cys-64–Cys-77. The tract at residues Tyr-53 to Phe-55 is involved in active face.

It belongs to the neurotoxin 10 (Hwtx-1) family. 09 (HaTx) subfamily. Expressed by the venom gland.

The protein resides in the secreted. Inhibits Kv2.1/KCNB1 and Kv4.2/KCND2 voltage-gated potassium channels. Acts as a gating modifier by shifting channel openings to more depolarized voltages and acts via the occupancy of multiple binding sites on the channel. The toxin binding sites are situated on the S3-S4 extracellular linker of the channel. At least two hanatoxin molecules can occupy the Kv2.1/KCNB1 channel, and maybe more (three or four). Can also inhibit calcium channels (Cav2.1/CACNA1A). Needs to partition into the membrane in order to bind to the channel. This is Kappa-theraphotoxin-Gr1a from Grammostola rosea (Chilean rose tarantula).